The primary structure comprises 127 residues: Aspartate 1-decarboxylase (127 aa).

Residue Ser25 is the Schiff-base intermediate with substrate; via pyruvic acid of the active site. A Pyruvic acid (Ser) modification is found at Ser25. Thr57 provides a ligand contact to substrate. Tyr58 acts as the Proton donor in catalysis. 73 to 75 contacts substrate; that stretch reads GAA.

This sequence belongs to the PanD family. As to quaternary structure, heterooctamer of four alpha and four beta subunits. The cofactor is pyruvate. In terms of processing, is synthesized initially as an inactive proenzyme, which is activated by self-cleavage at a specific serine bond to produce a beta-subunit with a hydroxyl group at its C-terminus and an alpha-subunit with a pyruvoyl group at its N-terminus.

The protein resides in the cytoplasm. The catalysed reaction is L-aspartate + H(+) = beta-alanine + CO2. It functions in the pathway cofactor biosynthesis; (R)-pantothenate biosynthesis; beta-alanine from L-aspartate: step 1/1. Functionally, catalyzes the pyruvoyl-dependent decarboxylation of aspartate to produce beta-alanine. This chain is Aspartate 1-decarboxylase, found in Geobacillus sp. (strain WCH70).